A 741-amino-acid chain; its full sequence is Photosystem I P700 chlorophyll a apoprotein A2 1 (741 aa).

A run of 8 helical transmembrane segments spans residues 46 to 69, 135 to 158, 175 to 199, 273 to 291, 334 to 357, 373 to 399, 421 to 443, and 524 to 542; these read IFAT…FHVA, LYTG…LHLQ, LNHH…HVAI, IAHH…GHMY, LHFQ…QHMY, AALY…IFLV, AIIS…LYVH, and FLVH…LILV. [4Fe-4S] cluster is bound by residues Cys566 and Cys575. 2 helical membrane passes run 582-603 and 650-672; these read SFYL…YWHW and LSVW…MFLI. His661, Met669, and Tyr677 together coordinate chlorophyll a. Residue Trp678 participates in phylloquinone binding. A helical membrane pass occupies residues 714-734; the sequence is VVGLAHFTVGYVLTYAAFLIA.

Belongs to the PsaA/PsaB family. As to quaternary structure, the PsaA/B heterodimer binds the P700 chlorophyll special pair and subsequent electron acceptors. PSI consists of a core antenna complex that captures photons, and an electron transfer chain that converts photonic excitation into a charge separation. The cyanobacterial PSI reaction center is composed of one copy each of PsaA,B,C,D,E,F,I,J,K,L,M and X, and forms trimeric complexes. Requires PSI electron transfer chain: 5 chlorophyll a, 1 chlorophyll a', 2 phylloquinones and 3 4Fe-4S clusters. PSI core antenna: 90 chlorophyll a, 22 carotenoids, 3 phospholipids and 1 galactolipid. P700 is a chlorophyll a/chlorophyll a' dimer, A0 is one or more chlorophyll a, A1 is one or both phylloquinones and FX is a shared 4Fe-4S iron-sulfur center. as cofactor.

The protein localises to the cellular thylakoid membrane. It catalyses the reaction reduced [plastocyanin] + hnu + oxidized [2Fe-2S]-[ferredoxin] = oxidized [plastocyanin] + reduced [2Fe-2S]-[ferredoxin]. In terms of biological role, psaA and PsaB bind P700, the primary electron donor of photosystem I (PSI), as well as the electron acceptors A0, A1 and FX. PSI is a plastocyanin/cytochrome c6-ferredoxin oxidoreductase, converting photonic excitation into a charge separation, which transfers an electron from the donor P700 chlorophyll pair to the spectroscopically characterized acceptors A0, A1, FX, FA and FB in turn. Oxidized P700 is reduced on the lumenal side of the thylakoid membrane by plastocyanin or cytochrome c6. This is Photosystem I P700 chlorophyll a apoprotein A2 1 from Trichormus variabilis (strain ATCC 29413 / PCC 7937) (Anabaena variabilis).